A 362-amino-acid chain; its full sequence is Cobalt-precorrin-5B C(1)-methyltransferase (362 aa).

This sequence belongs to the CbiD family.

It catalyses the reaction Co-precorrin-5B + S-adenosyl-L-methionine = Co-precorrin-6A + S-adenosyl-L-homocysteine. Its pathway is cofactor biosynthesis; adenosylcobalamin biosynthesis; cob(II)yrinate a,c-diamide from sirohydrochlorin (anaerobic route): step 6/10. Functionally, catalyzes the methylation of C-1 in cobalt-precorrin-5B to form cobalt-precorrin-6A. The protein is Cobalt-precorrin-5B C(1)-methyltransferase of Burkholderia ambifaria (strain MC40-6).